A 444-amino-acid polypeptide reads, in one-letter code: MKAVESNFDGLVGPTHNYSGLSVGNIASKSNQSGVSNPKQAVKQGLEKMKALHDMGFVQGVLAPQERPDIHTLRRLGFSGSDSEVLKKSYQYSPQLLAACSSASSMWTANAGTVSPSADTTDGKVHFTPANLINKFHRSIEDQVTGNILKATFSDEKHFVHHEALPHSDYFGDEGAANHTRFCREYGEQGVEFFVFGKSAFNESYLAPKKYPARQTLEASEAIARTHGLREQFTVFAQQNPDVIDRGVFHNDVIAVGNKNTLFCHQQAFLNQEKVKSDLCASYGSGFNVIEVPTDKVSVQDAVETYLFNSQLITKADGTTLIILPEHCRQNSRVWAYLNELIEQKRGIDELHTFDLKQSMQNGGGPACLRLRVVLNEAEQKAVNQHTLMSEELFTTLNLWADKHYRDRIEDKDLADSQLLVESRSALDELTQIMHLGSIYPFQK.

Residues 19–28 (SGLSVGNIAS), Asn110, and 137–138 (HR) each bind substrate. Residue Glu174 is part of the active site. Arg214 is a substrate binding site. His250 is a catalytic residue. Substrate-binding residues include Asp252 and Asn362. Cys368 serves as the catalytic Nucleophile.

The protein belongs to the succinylarginine dihydrolase family. As to quaternary structure, homodimer.

The enzyme catalyses N(2)-succinyl-L-arginine + 2 H2O + 2 H(+) = N(2)-succinyl-L-ornithine + 2 NH4(+) + CO2. The protein operates within amino-acid degradation; L-arginine degradation via AST pathway; L-glutamate and succinate from L-arginine: step 2/5. In terms of biological role, catalyzes the hydrolysis of N(2)-succinylarginine into N(2)-succinylornithine, ammonia and CO(2). The sequence is that of N-succinylarginine dihydrolase from Aliivibrio fischeri (strain MJ11) (Vibrio fischeri).